We begin with the raw amino-acid sequence, 106 residues long: UPF0060 membrane protein Csal_2746 (106 aa).

4 consecutive transmembrane segments (helical) span residues 6–26 (LLFI…WLWL), 31–51 (SPWL…LLSL), 59–79 (VYAA…WGVD), and 85–105 (PTDW…ASGW).

The protein belongs to the UPF0060 family.

The protein resides in the cell inner membrane. The sequence is that of UPF0060 membrane protein Csal_2746 from Chromohalobacter salexigens (strain ATCC BAA-138 / DSM 3043 / CIP 106854 / NCIMB 13768 / 1H11).